The chain runs to 138 residues: Large ribosomal subunit protein uL16 (138 aa).

It belongs to the universal ribosomal protein uL16 family. As to quaternary structure, part of the 50S ribosomal subunit.

Its function is as follows. Binds 23S rRNA and is also seen to make contacts with the A and possibly P site tRNAs. This is Large ribosomal subunit protein uL16 from Acidiphilium cryptum (strain JF-5).